Here is an 813-residue protein sequence, read N- to C-terminus: Origin of replication complex subunit 1B (813 aa).

Positions 1–109 are disordered; that stretch reads MASTPRAKTF…TPKKKKKIDS (109 aa). Over residues 11-21 the composition is skewed to polar residues; it reads KSPTKTPSNIY. A compositionally biased stretch (low complexity) spans 27–41; the sequence is SPSSTSHTPQTPETH. The segment covering 43-52 has biased composition (basic residues); sequence PLRRSARHVS. Residues 83 to 90 carry the Nuclear localization signal motif; it reads PRKPTTDV. The tract at residues 163-187 is histone H3 binding; the sequence is DPEIEDCQICFKSDTNIMIECDDCL. A PHD-type zinc finger spans residues 166–215; that stretch reads IEDCQICFKSDTNIMIECDDCLGGFHLKCLKPPLKEVPEGDWICQFCEVK. Zn(2+) contacts are provided by cysteine 169, cysteine 172, cysteine 183, cysteine 186, histidine 191, and cysteine 194. The segment at 203-207 is histone H3 binding; it reads PEGDW. Zn(2+) is bound by residues cysteine 209 and cysteine 212. Residues 226 to 344 form the BAH domain; the sequence is PKPPEGKKLA…VHWRSFKRLA (119 aa). The segment at 319–324 is histone H3 binding; the sequence is ASNDGD. The disordered stretch occupies residues 349–372; sequence GDSDSDQEWNGRKEEEVDDSDEEM. The interval 436 to 803 is necessary and sufficient for ORC complex assembly; the sequence is PKSLPCRSKE…DDVAFALKDN (368 aa). ATP is bound at residue 471–479; the sequence is GVPGTGKTI. Positions 561 and 562 each coordinate Mg(2+). Residues glutamate 562, asparagine 595, and arginine 660 each coordinate ATP.

The protein belongs to the ORC1 family. As to quaternary structure, component of the origin recognition complex (ORC) composed of at least ORC1 (ORC1A or ORC1B), ORC2, ORC3, ORC4, ORC5 and ORC6. ORC is regulated in a cell-cycle and development dependent manner. It is sequentially assembled at the exit from anaphase of mitosis and disassembled as cells enter S phase. Interacts directly with ORC2 and ORC5. Binds mostly unmodified histone H3, and, with lower efficiency, H3K4me1 H3K4me2 and H3K4me3. In terms of tissue distribution, follow a cell-cycle regulation with a peak at the G1/S-phase. Mostly expressed in flower buds, and, to a lower exent, in roots, leaves and stems.

It is found in the nucleus. Its function is as follows. Essential protein required for ovules fertilization. Component of the origin recognition complex (ORC) that binds origins of replication. It has a role in both chromosomal replication and mating type transcriptional silencing. Binds to the ARS consensus sequence (ACS) of origins of replication. H3K4me3 effector that positively regulates the transcription of a subset of genes. This is Origin of replication complex subunit 1B from Arabidopsis thaliana (Mouse-ear cress).